We begin with the raw amino-acid sequence, 435 residues long: GTPase Der (435 aa).

EngA-type G domains are found at residues proline 4–aspartate 167 and isoleucine 175–threonine 350. GTP-binding positions include glycine 10–serine 17, aspartate 57–isoleucine 61, asparagine 119–aspartate 122, glycine 181–serine 188, aspartate 228–isoleucine 232, and asparagine 293–aspartate 296. Positions arginine 351–lysine 435 constitute a KH-like domain.

This sequence belongs to the TRAFAC class TrmE-Era-EngA-EngB-Septin-like GTPase superfamily. EngA (Der) GTPase family. In terms of assembly, associates with the 50S ribosomal subunit.

GTPase that plays an essential role in the late steps of ribosome biogenesis. The protein is GTPase Der of Lacticaseibacillus paracasei (strain ATCC 334 / BCRC 17002 / CCUG 31169 / CIP 107868 / KCTC 3260 / NRRL B-441) (Lactobacillus paracasei).